A 587-amino-acid polypeptide reads, in one-letter code: Calcium/calmodulin-dependent protein kinase kinase 2 (587 aa).

Over residues 1-11 (MSSCVSSQPTS) the composition is skewed to polar residues. 2 disordered regions span residues 1-32 (MSSCVSSQPTSDRAAPQDELGSGGVSRESQKP) and 74-115 (EADG…SSLD). S2 carries the post-translational modification N-acetylserine. A phosphoserine mark is found at S99, S113, S128, S132, and S136. The span at 101 to 115 (QERSQGGPASSSSLD) shows a compositional bias: polar residues. Positions 164-445 (YTLKDEIGKG…VPEIKLHPWV (282 aa)) constitute a Protein kinase domain. ATP is bound by residues 170–178 (IGKGSYGVV) and K193. The RP domain stretch occupies residues 203–225 (QAGFPRRPPPRGTRPAPGGCIQP). The disordered stretch occupies residues 204–224 (AGFPRRPPPRGTRPAPGGCIQ). Catalysis depends on D311, which acts as the Proton acceptor. The interval 471–476 (ENSVKH) is autoinhibitory domain. Positions 474–499 (VKHIPSLATVILVKTMIRKRSFGNPF) are calmodulin-binding. S494 and S510 each carry phosphoserine. Positions 496-587 (GNPFEGSRRE…QQPEEAMEPE (92 aa)) are disordered. Residues 520-535 (PTREWEPLSEPKEARQ) are compositionally biased toward basic and acidic residues. Residues 569-579 (PGSPPRTPPQQ) show a composition bias toward pro residues. S571 carries the phosphoserine modification.

The protein belongs to the protein kinase superfamily. Ser/Thr protein kinase family. In terms of assembly, interacts with calmodulin. Phosphorylated by PKA. Each isoform may show a different pattern of phosphorylation. Autophosphorylated. Mainly expressed in brain, but detected in all tissues tested (at protein level). In the brain, isoform 1 may be predominant. with high levels in the cerebellum and hippocampus, although isoform 3 is detectable. Isoform 3 is also expressed in lung.

It is found in the nucleus. It localises to the cytoplasm. Its subcellular location is the cell projection. The protein resides in the neuron projection. The catalysed reaction is L-seryl-[protein] + ATP = O-phospho-L-seryl-[protein] + ADP + H(+). It catalyses the reaction L-threonyl-[protein] + ATP = O-phospho-L-threonyl-[protein] + ADP + H(+). Its activity is regulated as follows. Activated by Ca(2+)/calmodulin. Binding of calmodulin may relieve intrasteric autoinhibition. Autophosphorylation does not alter activity or regulation by Ca(2+)/calmodulin. In part, activity is independent on Ca(2+)/calmodulin. In terms of biological role, calcium/calmodulin-dependent protein kinase belonging to a proposed calcium-triggered signaling cascade involved in a number of cellular processes. Phosphorylates CAMK1 and CAMK4. Phosphorylates CAMK1D. Seems to be involved in hippocampal activation of CREB1. Efficiently phosphorylates 5'-AMP-activated protein kinase (AMPK) trimer, including that consisting of PRKAA1, PRKAB1 and PRKAG1. This phosphorylation is stimulated in response to Ca(2+) signals. May play a role in neurite growth. Isoform 2 may promote neurite elongation, while isoform 1 may promoter neurite branching. This Rattus norvegicus (Rat) protein is Calcium/calmodulin-dependent protein kinase kinase 2 (Camkk2).